The following is a 279-amino-acid chain: Complement component 1 Q subcomponent-binding protein, mitochondrial (279 aa).

The transit peptide at 1–71 (MLPLLRCVPR…PVPCACGCGA (71 aa)) directs the protein to the mitochondrion. The tract at residues 74 to 91 (TEGDKAFVEFLTDEIKEE) is C1q binding. 2 positions are modified to N6-acetyllysine: Lys-89 and Lys-92. Residues 134-162 (NNSIPPTFDGEEEPSQGQKAEEQEPELTS) are disordered. Positions 166–210 (FVVEVTKTDGKKTLVLDCHYPEDEIGHEDEAESDIFSIKEVSFQT) are interaction with MAVS. Tyr-185 carries the post-translational modification Phosphotyrosine. A phosphoserine mark is found at Ser-198 and Ser-202. Thr-211 carries the phosphothreonine modification.

The protein belongs to the MAM33 family. As to quaternary structure, homotrimer; three monomers form a donut-shaped structure with an unusually asymmetric charge distribution on the surface. Interacts with CDK13, HRK, VTN, NFYB, ADRA1B, FOXC1, DDX21, DDX50, NCL, SRSF1 and SRSF9. Interacts with CD93; the association may represent a cell surface C1q receptor. Interacts with KRT1; the association represents a cell surface kininogen receptor. Interacts with CD209; the interaction is indicative for a C1q:C1QBP:CD209 signaling complex. Interacts with FBL and RRP1; the respective interactions with C1QBP are competitive. Probably associates with the mitoribosome. Interacts with MAVS; the interaction occurs upon viral transfection. Interacts with PPIF. Interacts with U2AF1L4. Interacts with PLEKHN1. Interacts with VGF-derived peptide TLQP-21. Interacts with MRE11 and RAD50; forming the MRC (MRE11-RAD50-C1QBP) complex that inhibits the activity of MRE11. In terms of tissue distribution, ubiquitous.

Its subcellular location is the mitochondrion matrix. It is found in the nucleus. The protein resides in the cell membrane. It localises to the secreted. The protein localises to the cytoplasm. Its subcellular location is the nucleolus. Its function is as follows. Multifunctional and multicompartmental protein involved in inflammation and infection processes, ribosome biogenesis, protein synthesis in mitochondria, regulation of apoptosis, transcriptional regulation and pre-mRNA splicing. At the cell surface is thought to act as an endothelial receptor for plasma proteins of the complement and kallikrein-kinin cascades. Putative receptor for C1q; specifically binds to the globular 'heads' of C1q thus inhibiting C1; may perform the receptor function through a complex with C1qR/CD93. In complex with cytokeratin-1/KRT1 is a high affinity receptor for kininogen-1/HMWK. Can also bind other plasma proteins, such as coagulation factor XII leading to its autoactivation. May function to bind initially fluid kininogen-1 to the cell membrane. The secreted form may enhance both extrinsic and intrinsic coagulation pathways. It is postulated that the cell surface form requires docking with transmembrane proteins for downstream signaling which might be specific for a cell-type or response. By acting as C1q receptor is involved in chemotaxis of immature dendritic cells and neutrophils and is proposed to signal through CD209/DC-SIGN on immature dendritic cells, through integrin alpha-4/beta-1 during trophoblast invasion of the decidua, and through integrin beta-1 during endothelial cell adhesion and spreading. Signaling involved in inhibition of innate immune response is implicating the PI3K-AKT/PKB pathway. Required for protein synthesis in mitochondria. In mitochondrial translation may be involved in formation of functional 55S mitoribosomes; the function seems to involve its RNA-binding activity. Acts as a RNA modification reader, which specifically recognizes and binds mitochondrial RNAs modified by C5-methylcytosine (m5C) in response to stress, and promotes recruitment of the mitochondrial degradosome complex, leading to their degradation. May be involved in the nucleolar ribosome maturation process; the function may involve the exchange of FBL for RRP1 in the association with pre-ribosome particles. Involved in regulation of RNA splicing by inhibiting the RNA-binding capacity of SRSF1 and its phosphorylation. Is required for the nuclear translocation of splicing factor U2AF1L4. Involved in regulation of CDKN2A- and HRK-mediated apoptosis. Stabilizes mitochondrial CDKN2A isoform smARF. May be involved in regulation of FOXC1 transcriptional activity and NFY/CCAAT-binding factor complex-mediated transcription. May play a role in antibacterial defense as it can bind to cell surface hyaluronan and inhibit Streptococcus pneumoniae hyaluronate lyase. May be involved in modulation of the immune response; ligation by HCV core protein is resulting in suppression of interleukin-12 production in monocyte-derived dendritic cells. Involved in regulation of antiviral response by inhibiting RIGI- and IFIH1-mediated signaling pathways probably involving its association with MAVS after viral infection. Acts as a regulator of DNA repair via homologous recombination by inhibiting the activity of MRE11: interacts with unphosphorylated MRE11 and RAD50 in absence of DNA damage, preventing formation and activity of the MRN complex. Following DNA damage, dissociates from phosphorylated MRE11, allowing formation of the MRN complex. The protein is Complement component 1 Q subcomponent-binding protein, mitochondrial (C1qbp) of Rattus norvegicus (Rat).